Consider the following 240-residue polypeptide: Membrane-spanning 4-domains subfamily A member 7 (240 aa).

Residues 1 to 47 (MLLQSQTMGVSHSFTPKGITIPQREKPGHMYQNEDYLQNGLPTETTV) lie on the Cytoplasmic side of the membrane. Residues 48–68 (LGTVQILCCLLISSLGAILVF) traverse the membrane as a helical segment. Residues 69-83 (APYPSHFNPAISTTL) lie on the Extracellular side of the membrane. A helical membrane pass occupies residues 84–104 (MSGYPFLGALCFGITGSLSII). The Cytoplasmic segment spans residues 105-121 (SGKQSTKPFDLSSLTSN). Residues 122–142 (AVSSVTAGAGLFLLADSMVAL) form a helical membrane-spanning segment. Over 143 to 178 (RTASQHCGSEMDYLSSLPYSEYYYPIYEIKDCLLTS) the chain is Extracellular. Residues 179-199 (VSLTGVLVVMLIFTVLELLLA) form a helical membrane-spanning segment. The Cytoplasmic segment spans residues 200 to 240 (AYSSVFWWKQLYSNNPGSSFSSTQSQDHIQQVKKSSSRSWI). Residues 218–240 (SFSSTQSQDHIQQVKKSSSRSWI) form a disordered region.

Belongs to the MS4A family. As to expression, ubiquitous expression in normal tissues. Expression is more elevated in adult liver, lung, spleen, and heart than in their fetal counterparts, and is higher in normal tissues than in the cancerous tissue or cell lines. Low levels of expression were detected in the promonocytic stage, whereas high levels of expression were detected in mature monocytes.

It localises to the membrane. In terms of biological role, may be involved in signal transduction as a component of a multimeric receptor complex. This is Membrane-spanning 4-domains subfamily A member 7 (MS4A7) from Homo sapiens (Human).